We begin with the raw amino-acid sequence, 189 residues long: MAPAWSFLLALLLLSCNAICSLGCHLPHTHSLPNRRVLTLLRQLRRVSPSSCLQDRNDFAFPQEALGGSQLQKAQAISVLHEVTQHTFQLFSTEGSAAAWDESLLDKLRAALDQQLTDLQACLRQEEGLRGAPLLKEDASLAVRKYFHRLTLYLREKRHNPCAWEVVRAEVMRAFSSSTNLQERFRRKD.

An N-terminal signal peptide occupies residues 1–23; it reads MAPAWSFLLALLLLSCNAICSLG. 2 disulfide bridges follow: Cys24–Cys122 and Cys52–Cys162.

It belongs to the alpha/beta interferon family.

The protein resides in the secreted. Produced by macrophages, IFN-alpha have antiviral activities. Interferon stimulates the production of two enzymes: a protein kinase and an oligoadenylate synthetase. The sequence is that of Interferon alpha-H (IFNAH) from Bos taurus (Bovine).